Consider the following 333-residue polypeptide: Calcium uniporter protein, mitochondrial (333 aa).

The transit peptide at 1–22 directs the protein to the mitochondrion; it reads MRNGRCLVTPFVTAQRLANLRN. The Mitochondrial matrix portion of the chain corresponds to 23–214; sequence TLWNRQQIAF…QECEAHTDRV (192 aa). Residues 180–193 are a coiled coil; the sequence is KKLLLQLENAETLL. An outer juxtamembrane helix (OJMH) region spans residues 195–213; that stretch reads PLHDAKRKIEQECEAHTDR. A helical transmembrane segment spans residues 215–234; that stretch reads MWAGFAAMGVQTGLFARLTW. The Mitochondrial intermembrane segment spans residues 235–243; sequence WEYSWDIME. The Selectivity filter signature appears at 239 to 247; the sequence is WDIMEPVTY. Glu-243 provides a ligand contact to Ca(2+). The chain crosses the membrane as a helical span at residues 244-260; the sequence is PVTYFATYSTVCATFGY. At 261–333 the chain is on the mitochondrial matrix side; it reads YLYTQQSFEY…SYLSNLEAEK (73 aa). Residues 262–271 are inner juxtamembrane helix (IJMH); that stretch reads LYTQQSFEYP. Positions 289-316 form a coiled coil; the sequence is QNFDIEKYNRLVTEVDELRNQLKRMRDP.

This sequence belongs to the MCU (TC 1.A.77) family.

The protein resides in the mitochondrion inner membrane. The enzyme catalyses Ca(2+)(in) = Ca(2+)(out). Inhibited by ruthenium red or its derivative Ru360; possibly by obstructing the pore. Its function is as follows. Mitochondrial inner membrane calcium uniporter that mediates calcium uptake into mitochondria. Constitutes a pore-forming and calcium-conducting subunit. Mitochondrial calcium homeostasis plays key roles in cellular physiology and regulates cell bioenergetics, cytoplasmic calcium signals and activation of cell death pathways. Required for rapid mitochondrial calcium uptake and mitochondrial reactive oxygen species (mtROS) production after wounding. In addition, together with mitochondrial calcium regulator micu-1, required for mitochondrial calcium uptake following axon injury in PLM touch receptor neurons. This Caenorhabditis elegans protein is Calcium uniporter protein, mitochondrial.